A 172-amino-acid chain; its full sequence is Transcription factor E (172 aa).

One can recognise an HTH TFE/IIEalpha-type domain in the interval 8–90; that stretch reads DDPVVQKYLH…LWTFQYENVP (83 aa).

The protein belongs to the TFE family. As to quaternary structure, monomer. Interaction with RNA polymerase subunits RpoF and RpoE is necessary for Tfe stimulatory transcription activity. Able to interact with Tbp and RNA polymerase in the absence of DNA promoter. Interacts both with the preinitiation and elongation complexes.

Its function is as follows. Transcription factor that plays a role in the activation of archaeal genes transcribed by RNA polymerase. Facilitates transcription initiation by enhancing TATA-box recognition by TATA-box-binding protein (Tbp), and transcription factor B (Tfb) and RNA polymerase recruitment. Not absolutely required for transcription in vitro, but particularly important in cases where Tbp or Tfb function is not optimal. It dynamically alters the nucleic acid-binding properties of RNA polymerases by stabilizing the initiation complex and destabilizing elongation complexes. Seems to translocate with the RNA polymerase following initiation and acts by binding to the non template strand of the transcription bubble in elongation complexes. In Halobacterium salinarum (strain ATCC 700922 / JCM 11081 / NRC-1) (Halobacterium halobium), this protein is Transcription factor E.